The sequence spans 107 residues: Large ribosomal subunit protein mL55 (107 aa).

The transit peptide at 1–16 (MLLKQLPQAVQQIRCI) directs the protein to the mitochondrion.

It belongs to the mitochondrion-specific ribosomal protein mL55 family. Component of the mitochondrial ribosome large subunit (39S) which comprises a 16S rRNA and about 50 distinct proteins. In terms of tissue distribution, ubiquitously expressed (at protein level).

It localises to the mitochondrion. Involved in mitochondrial biogenesis and G2/M phase cell cycle progression. This Drosophila melanogaster (Fruit fly) protein is Large ribosomal subunit protein mL55 (mRpL55).